A 333-amino-acid chain; its full sequence is Anthranilate phosphoribosyltransferase (333 aa).

Residues glycine 81, 84 to 85 (GD), threonine 89, 91 to 94 (NIST), 109 to 117 (KHGNRSVSS), and alanine 121 contribute to the 5-phospho-alpha-D-ribose 1-diphosphate site. Glycine 81 provides a ligand contact to anthranilate. Serine 93 is a Mg(2+) binding site. Asparagine 112 is an anthranilate binding site. Residue arginine 167 participates in anthranilate binding. Mg(2+) contacts are provided by aspartate 225 and glutamate 226.

The protein belongs to the anthranilate phosphoribosyltransferase family. Homodimer. Mg(2+) is required as a cofactor.

The catalysed reaction is N-(5-phospho-beta-D-ribosyl)anthranilate + diphosphate = 5-phospho-alpha-D-ribose 1-diphosphate + anthranilate. The protein operates within amino-acid biosynthesis; L-tryptophan biosynthesis; L-tryptophan from chorismate: step 2/5. In terms of biological role, catalyzes the transfer of the phosphoribosyl group of 5-phosphorylribose-1-pyrophosphate (PRPP) to anthranilate to yield N-(5'-phosphoribosyl)-anthranilate (PRA). This chain is Anthranilate phosphoribosyltransferase, found in Haemophilus influenzae (strain PittEE).